Reading from the N-terminus, the 116-residue chain is Large ribosomal subunit protein bL19 (116 aa).

The protein belongs to the bacterial ribosomal protein bL19 family.

Its function is as follows. This protein is located at the 30S-50S ribosomal subunit interface and may play a role in the structure and function of the aminoacyl-tRNA binding site. This is Large ribosomal subunit protein bL19 from Pseudomonas fluorescens (strain ATCC BAA-477 / NRRL B-23932 / Pf-5).